The primary structure comprises 225 residues: Iron-sulfur flavoprotein CD630_04720 (225 aa).

The [4Fe-4S] cluster site is built by cysteine 49, cysteine 52, cysteine 55, and cysteine 61.

This sequence belongs to the SsuE family. Isf subfamily. Homodimer. The cofactor is FMN. Requires [4Fe-4S] cluster as cofactor.

In terms of biological role, redox-active protein probably involved in electron transport. This Clostridioides difficile (strain 630) (Peptoclostridium difficile) protein is Iron-sulfur flavoprotein CD630_04720.